The chain runs to 369 residues: MLMKTTAVHAPASQGTSGIVLDSLRVAYHGNVVLKPLSLTIEPGEVLALIGPSGSGKTTVLRAVAGFVQPAGGRILIGDTDVTHLPPYKRGLAMVVQNYALFPHLKVEDNVAFGLRAQKQPKALINERVTQALKTVGMSDYATRYPHQLSGGQQQRVAIARAIAVRPRVLLLDEPLSALDAQIRHNMVEEIARLHRELPELTILYVTHDQTEALTLADKIGIMKDGSLIAHGETRALYHHPPNRFAAEFLGRANILSAIALGITEVPGLVDVSCGGAVIRAFSQGSHHGYNKLLCIRPQHLSLTPRSAYSNRFNATLQSVHWQGDLTHLLCDVAGETVRMVLTHVNPLPRVGDKLALWFEPDDAVLIEV.

The region spanning 19–250 (IVLDSLRVAY…PPNRFAAEFL (232 aa)) is the ABC transporter domain. Residue 51–58 (GPSGSGKT) coordinates ATP.

It belongs to the ABC transporter superfamily. 2-aminoethylphosphonate importer (TC 3.A.1.11.5) family.

The protein resides in the cell inner membrane. In terms of biological role, probably part of the PhnSTUV complex (TC 3.A.1.11.5) involved in 2-aminoethylphosphonate import. Probably responsible for energy coupling to the transport system. The protein is Putative 2-aminoethylphosphonate import ATP-binding protein PhnT (phnT) of Salmonella typhi.